The primary structure comprises 337 residues: Alcohol dehydrogenase (337 aa).

Positions 38, 61, 92, 95, 98, 106, and 148 each coordinate Zn(2+). NAD(+) is bound by residues 172–177, D195, K200, 260–262, and R331; these read GIGGLG and VGL.

This sequence belongs to the zinc-containing alcohol dehydrogenase family. Zn(2+) serves as cofactor.

It carries out the reaction a primary alcohol + NAD(+) = an aldehyde + NADH + H(+). It catalyses the reaction a secondary alcohol + NAD(+) = a ketone + NADH + H(+). Its activity is regulated as follows. Substrate inhibition is not observed with any alcohols, and the enzyme-NADH dissociation is not considered to be a rate-limiting step. In terms of biological role, NAD(+)-dependent alcohol dehydrogenase. This is Alcohol dehydrogenase (adhT) from Geobacillus stearothermophilus (Bacillus stearothermophilus).